Consider the following 64-residue polypeptide: Large ribosomal subunit protein bL33 (64 aa).

Positions 19 to 40 (TSTDPKRSNGVSRYTTEKNRRN) are disordered.

The protein belongs to the bacterial ribosomal protein bL33 family.

The chain is Large ribosomal subunit protein bL33 from Prochlorococcus marinus (strain MIT 9215).